Consider the following 144-residue polypeptide: Large ribosomal subunit protein uL15 (144 aa).

Residues 1–53 are disordered; the sequence is MRLNTLSPAEGAKHNAKRLGRGIGSGLGKTSGRGHKGQKARTGGGVRRGFEGG. A compositionally biased stretch (gly residues) spans 21-31; the sequence is RGIGSGLGKTS.

It belongs to the universal ribosomal protein uL15 family. Part of the 50S ribosomal subunit.

Functionally, binds to the 23S rRNA. The polypeptide is Large ribosomal subunit protein uL15 (Histophilus somni (strain 129Pt) (Haemophilus somnus)).